We begin with the raw amino-acid sequence, 565 residues long: Membrane protein insertase YidC (565 aa).

6 helical membrane passes run 6–26, 348–368, 370–390, 437–457, 479–499, and 516–536; these read VLLI…WSKN, LMAL…SLLH, WGWA…PLSA, GGCF…WVLV, PYFI…KLTP, and PLIF…YWVI.

It belongs to the OXA1/ALB3/YidC family. Type 1 subfamily. As to quaternary structure, interacts with the Sec translocase complex via SecD. Specifically interacts with transmembrane segments of nascent integral membrane proteins during membrane integration.

The protein resides in the cell inner membrane. Functionally, required for the insertion and/or proper folding and/or complex formation of integral membrane proteins into the membrane. Involved in integration of membrane proteins that insert both dependently and independently of the Sec translocase complex, as well as at least some lipoproteins. Aids folding of multispanning membrane proteins. The polypeptide is Membrane protein insertase YidC (Xylella fastidiosa (strain M23)).